The chain runs to 379 residues: Protein RecA (379 aa).

The tract at residues Met1 to Glu24 is disordered. Residues Ser7–Leu16 are compositionally biased toward polar residues. Position 84 to 91 (Gly84 to Thr91) interacts with ATP.

Belongs to the RecA family.

The protein resides in the cytoplasm. Functionally, can catalyze the hydrolysis of ATP in the presence of single-stranded DNA, the ATP-dependent uptake of single-stranded DNA by duplex DNA, and the ATP-dependent hybridization of homologous single-stranded DNAs. It interacts with LexA causing its activation and leading to its autocatalytic cleavage. The sequence is that of Protein RecA from Prochlorococcus marinus (strain MIT 9303).